We begin with the raw amino-acid sequence, 464 residues long: Siroheme synthase (464 aa).

Residues M1 to L203 form a precorrin-2 dehydrogenase /sirohydrochlorin ferrochelatase region. Residues E22–I23 and P43–E44 each bind NAD(+). S128 carries the phosphoserine modification. The uroporphyrinogen-III C-methyltransferase stretch occupies residues G216–V464. P225 provides a ligand contact to S-adenosyl-L-methionine. The active-site Proton acceptor is the D248. The active-site Proton donor is the K270. Residues G301–D303, I306, T331–A332, M383, and G412 each bind S-adenosyl-L-methionine.

The protein in the N-terminal section; belongs to the precorrin-2 dehydrogenase / sirohydrochlorin ferrochelatase family. In the C-terminal section; belongs to the precorrin methyltransferase family.

The enzyme catalyses uroporphyrinogen III + 2 S-adenosyl-L-methionine = precorrin-2 + 2 S-adenosyl-L-homocysteine + H(+). It carries out the reaction precorrin-2 + NAD(+) = sirohydrochlorin + NADH + 2 H(+). It catalyses the reaction siroheme + 2 H(+) = sirohydrochlorin + Fe(2+). The protein operates within cofactor biosynthesis; adenosylcobalamin biosynthesis; precorrin-2 from uroporphyrinogen III: step 1/1. Its pathway is cofactor biosynthesis; adenosylcobalamin biosynthesis; sirohydrochlorin from precorrin-2: step 1/1. It participates in porphyrin-containing compound metabolism; siroheme biosynthesis; precorrin-2 from uroporphyrinogen III: step 1/1. It functions in the pathway porphyrin-containing compound metabolism; siroheme biosynthesis; siroheme from sirohydrochlorin: step 1/1. The protein operates within porphyrin-containing compound metabolism; siroheme biosynthesis; sirohydrochlorin from precorrin-2: step 1/1. Functionally, multifunctional enzyme that catalyzes the SAM-dependent methylations of uroporphyrinogen III at position C-2 and C-7 to form precorrin-2 via precorrin-1. Then it catalyzes the NAD-dependent ring dehydrogenation of precorrin-2 to yield sirohydrochlorin. Finally, it catalyzes the ferrochelation of sirohydrochlorin to yield siroheme. This chain is Siroheme synthase, found in Pseudomonas fluorescens (strain ATCC BAA-477 / NRRL B-23932 / Pf-5).